Consider the following 262-residue polypeptide: Trypsin theta (262 aa).

A signal peptide spans 1–19 (MHGLVVLLVCLAVGSAFAG). A propeptide spans 20 to 34 (TIGVSNADPFEREGR) (activation peptide). In terms of domain architecture, Peptidase S1 spans 35–260 (IVGGEDTTIR…LRKWILNASQ (226 aa)). C61 and C77 are joined by a disulfide. Catalysis depends on charge relay system residues H76 and D121. Cystine bridges form between C186–C203 and C212–C236. Residue S216 is the Charge relay system of the active site.

Belongs to the peptidase S1 family.

It localises to the secreted. Its subcellular location is the extracellular space. The enzyme catalyses Preferential cleavage: Arg-|-Xaa, Lys-|-Xaa.. The polypeptide is Trypsin theta (thetaTry) (Drosophila erecta (Fruit fly)).